The sequence spans 101 residues: Apolipoprotein C-II (101 aa).

Residues Met-1–Gly-22 form the signal peptide. The tract at residues Thr-23–Thr-38 is O-glycosylated at one site. The tract at residues Ala-66–Leu-74 is lipid binding. Positions Ser-78–Glu-101 are lipoprotein lipase cofactor.

This sequence belongs to the apolipoprotein C2 family. Proapolipoprotein C-II is synthesized as a sialic acid containing glycoprotein which is subsequently desialylated prior to its proteolytic processing. Post-translationally, proapolipoprotein C-II, the major form found in plasma undergoes proteolytic cleavage of its N-terminal hexapeptide to generate apolipoprotein C-II, which occurs as the minor form in plasma. Liver and intestine.

It is found in the secreted. Functionally, component of chylomicrons, very low-density lipoproteins (VLDL), low-density lipoproteins (LDL), and high-density lipoproteins (HDL) in plasma. Plays an important role in lipoprotein metabolism as an activator of lipoprotein lipase. Both proapolipoprotein C-II and apolipoprotein C-II can activate lipoprotein lipase. In normolipidemic individuals, it is mainly distributed in the HDL, whereas in hypertriglyceridemic individuals, predominantly found in the VLDL and LDL. This is Apolipoprotein C-II (APOC2) from Homo sapiens (Human).